Consider the following 182-residue polypeptide: Dynactin subunit 5 (182 aa).

Met-1 is subject to N-acetylmethionine.

Belongs to the dynactin subunits 5/6 family. Dynactin subunit 5 subfamily. Subunit of dynactin, a multiprotein complex part of a tripartite complex with dynein and a adapter, such as BICDL1, BICD2 or HOOK3. The dynactin complex is built around ACTR1A/ACTB filament and consists of an actin-related filament composed of a shoulder domain, a pointed end and a barbed end. Its length is defined by its flexible shoulder domain. The soulder is composed of 2 DCTN1 subunits, 4 DCTN2 and 2 DCTN3. The 4 DCNT2 (via N-terminus) bind the ACTR1A filament and act as molecular rulers to determine the length. The pointed end is important for binding dynein-dynactin cargo adapters. Consists of 4 subunits: ACTR10, DCNT4, DCTN5 and DCTN6. Within the complex DCTN6 forms a heterodimer with DCTN5. The barbed end is composed of a CAPZA1:CAPZB heterodimers, which binds ACTR1A/ACTB filament and dynactin and stabilizes dynactin. Interacts with N4BP2L1.

It is found in the cytoplasm. Its subcellular location is the cytoskeleton. The protein resides in the chromosome. It localises to the centromere. The protein localises to the kinetochore. Functionally, part of the dynactin complex that activates the molecular motor dynein for ultra-processive transport along microtubules. The protein is Dynactin subunit 5 of Homo sapiens (Human).